A 293-amino-acid chain; its full sequence is Histamine N-methyltransferase A (293 aa).

Substrate is bound at residue Glu28. Positions 60, 89, 94, 120, and 142 each coordinate S-adenosyl-L-methionine. Asn283 contacts substrate.

It belongs to the class I-like SAM-binding methyltransferase superfamily. HNMT family. Monomer.

The protein resides in the cytoplasm. The catalysed reaction is histamine + S-adenosyl-L-methionine = N(tau)-methylhistamine + S-adenosyl-L-homocysteine + H(+). Functionally, inactivates histamine by N-methylation. Plays an important role in degrading histamine and in regulating the airway response to histamine. This is Histamine N-methyltransferase A (hnmt-a) from Xenopus laevis (African clawed frog).